Reading from the N-terminus, the 369-residue chain is Maltose/maltodextrin import ATP-binding protein MalK (369 aa).

Residues 4–234 enclose the ABC transporter domain; the sequence is VQLRNVTKAW…PADRFVAGFI (231 aa). 36-43 is an ATP binding site; that stretch reads GPSGCGKS.

Belongs to the ABC transporter superfamily. Maltooligosaccharide importer (TC 3.A.1.1.1) family. In terms of assembly, the complex is composed of two ATP-binding proteins (MalK), two transmembrane proteins (MalG and MalK) and a solute-binding protein (MalE).

The protein resides in the cell inner membrane. It carries out the reaction D-maltose(out) + ATP + H2O = D-maltose(in) + ADP + phosphate + H(+). Part of the ABC transporter complex MalEFGK involved in maltose/maltodextrin import. Responsible for energy coupling to the transport system. The chain is Maltose/maltodextrin import ATP-binding protein MalK from Salmonella typhi.